The chain runs to 307 residues: Nicotinamide/nicotinic acid mononucleotide adenylyltransferase 2 (307 aa).

Residues Ser16 and Phe17 each coordinate NAD(+). Position 24 (His24) interacts with ATP. Residues Trp92 and Thr95 each coordinate NAD(+). 2 S-palmitoyl cysteine lipidation sites follow: Cys164 and Cys165. NAD(+) contacts are provided by Gly200, Asp202, Leu212, Trp213, and Arg232. An ATP-binding site is contributed by 271-274; that stretch reads TKSR.

This sequence belongs to the eukaryotic NMN adenylyltransferase family. Monomer. Mg(2+) is required as a cofactor. Degraded in response to injured neurite. Degradation is caused by polyubiquitination by MYCBP2 after recognition by FBXO45. Post-translationally, palmitoylated; palmitoylation is required for membrane association. Expressed predominantly in the brain and nervous system.

The protein resides in the golgi apparatus membrane. The protein localises to the cytoplasmic vesicle membrane. It localises to the cytoplasm. Its subcellular location is the cell projection. It is found in the axon. The catalysed reaction is beta-nicotinamide D-ribonucleotide + ATP + H(+) = diphosphate + NAD(+). The enzyme catalyses nicotinate beta-D-ribonucleotide + ATP + H(+) = deamido-NAD(+) + diphosphate. It participates in cofactor biosynthesis; NAD(+) biosynthesis; NAD(+) from nicotinamide D-ribonucleotide: step 1/1. Its pathway is cofactor biosynthesis; NAD(+) biosynthesis; deamido-NAD(+) from nicotinate D-ribonucleotide: step 1/1. Its activity is regulated as follows. Inhibited by P1-(adenosine-5')-P3-(nicotinamide-riboside-5')-triphosphate (Np3AD) and P1-(adenosine-5')-P4-(nicotinamide-riboside-5')-tetraphosphate (Np4AD). Functionally, nicotinamide/nicotinate-nucleotide adenylyltransferase that acts as an axon maintenance factor. Axon survival factor required for the maintenance of healthy axons: acts by delaying Wallerian axon degeneration, an evolutionarily conserved process that drives the loss of damaged axons. Catalyzes the formation of NAD(+) from nicotinamide mononucleotide (NMN) and ATP. Can also use the deamidated form; nicotinic acid mononucleotide (NaMN) as substrate but with a lower efficiency. Cannot use triazofurin monophosphate (TrMP) as substrate. Also catalyzes the reverse reaction, i.e. the pyrophosphorolytic cleavage of NAD(+). For the pyrophosphorolytic activity prefers NAD(+), NADH and NaAD as substrates and degrades nicotinic acid adenine dinucleotide phosphate (NHD) less effectively. Fails to cleave phosphorylated dinucleotides NADP(+), NADPH and NaADP(+). Also acts as an activator of ADP-ribosylation by supporting the catalytic activity of PARP16 and promoting mono-ADP-ribosylation of ribosomes by PARP16. May be involved in the maintenance of axonal integrity. This is Nicotinamide/nicotinic acid mononucleotide adenylyltransferase 2 from Mus musculus (Mouse).